Consider the following 127-residue polypeptide: Glycine cleavage system H protein (127 aa).

Residues 24–105 form the Lipoyl-binding domain; that stretch reads TALVGITDFA…YGSGWMVKMK (82 aa). K65 is modified (N6-lipoyllysine).

This sequence belongs to the GcvH family. As to quaternary structure, the glycine cleavage system is composed of four proteins: P, T, L and H. (R)-lipoate is required as a cofactor.

Functionally, the glycine cleavage system catalyzes the degradation of glycine. The H protein shuttles the methylamine group of glycine from the P protein to the T protein. This Chlorobium luteolum (strain DSM 273 / BCRC 81028 / 2530) (Pelodictyon luteolum) protein is Glycine cleavage system H protein.